The following is a 1367-amino-acid chain: Mediator of RNA polymerase II transcription subunit 23 (1367 aa).

A disordered region spans residues 1343–1367; that stretch reads PPQALNSGSPAPQSNQVPASLPVTQ. Over residues 1346 to 1367 the composition is skewed to polar residues; that stretch reads ALNSGSPAPQSNQVPASLPVTQ.

This sequence belongs to the Mediator complex subunit 23 family. As to quaternary structure, component of the Mediator complex, which is composed of MED1, MED4, MED6, MED7, MED8, MED9, MED10, MED11, MED12, MED13, MED13L, MED14, MED15, MED16, MED17, MED18, MED19, MED20, MED21, MED22, MED23, MED24, MED25, MED26, MED27, MED29, MED30, MED31, CCNC, CDK8 and CDC2L6/CDK11. The MED12, MED13, CCNC and CDK8 subunits form a distinct module termed the CDK8 module. Mediator containing the CDK8 module is less active than Mediator lacking this module in supporting transcriptional activation. Individual preparations of the Mediator complex lacking one or more distinct subunits have been variously termed ARC, CRSP, DRIP, PC2, SMCC and TRAP. Interacts with CEBPB (when not methylated), CTNNB1, and GLI3. Interacts with CDK8 and ELK1.

The protein localises to the nucleus. Its function is as follows. Component of the Mediator complex, a coactivator involved in the regulated transcription of nearly all RNA polymerase II-dependent genes. Mediator functions as a bridge to convey information from gene-specific regulatory proteins to the basal RNA polymerase II transcription machinery. Mediator is recruited to promoters by direct interactions with regulatory proteins and serves as a scaffold for the assembly of a functional pre-initiation complex with RNA polymerase II and the general transcription factors. Also required for transcriptional activation subsequent to the assembly of the pre-initiation complex. Required for transcriptional activation by adenovirus E1A protein. Required for ELK1-dependent transcriptional activation in response to activated Ras signaling. The chain is Mediator of RNA polymerase II transcription subunit 23 (Med23) from Mus musculus (Mouse).